A 100-amino-acid chain; its full sequence is Small ribosomal subunit protein uS14c (100 aa).

The protein belongs to the universal ribosomal protein uS14 family. Part of the 30S ribosomal subunit.

Its subcellular location is the plastid. The protein localises to the chloroplast. In terms of biological role, binds 16S rRNA, required for the assembly of 30S particles. This is Small ribosomal subunit protein uS14c from Chlorokybus atmophyticus (Soil alga).